A 766-amino-acid chain; its full sequence is Protein transport protein Sec23B (766 aa).

Alanine 2 is modified (N-acetylalanine). Cysteine 61, cysteine 66, cysteine 85, and cysteine 88 together coordinate Zn(2+). N6-acetyllysine is present on lysine 564. One copy of the Gelsolin-like repeat lies at 633–719 (PEPVLLDSSS…EHGGSQARFL (87 aa)).

Belongs to the SEC23/SEC24 family. SEC23 subfamily. In terms of assembly, COPII is composed of at least five proteins: the Sec23/24 complex, the Sec13/31 complex and Sar1. Interacts with SAR1A.

The protein resides in the cytoplasmic vesicle. It is found in the COPII-coated vesicle membrane. It localises to the endoplasmic reticulum membrane. The protein localises to the cytoplasm. Its subcellular location is the cytosol. In terms of biological role, component of the coat protein complex II (COPII) which promotes the formation of transport vesicles from the endoplasmic reticulum (ER). The coat has two main functions, the physical deformation of the endoplasmic reticulum membrane into vesicles and the selection of cargo molecules for their transport to the Golgi complex. The sequence is that of Protein transport protein Sec23B from Pongo abelii (Sumatran orangutan).